Consider the following 151-residue polypeptide: MEGGVDARFYAILVTSGAEVNVATIIAERARALGLDIRSIIVPPRIKGYVILEAHDPGDVYDATRGLRHVKRRRPLILKFEEVMKLVKPEVEIPALKPGQVVEIVAGAFKGMKARVIDVNQSKGQVTVSLLEPLFRATATIPIDEVRPVEE.

One can recognise a KOW domain in the interval 98-128 (PGQVVEIVAGAFKGMKARVIDVNQSKGQVTV).

Belongs to the archaeal Spt5 family. Heterodimer composed of Spt4 and Spt5. Interacts with RNA polymerase (RNAP).

Stimulates transcription elongation. This is Transcription elongation factor Spt5 from Aeropyrum pernix (strain ATCC 700893 / DSM 11879 / JCM 9820 / NBRC 100138 / K1).